Here is a 140-residue protein sequence, read N- to C-terminus: Alpha-lactalbumin (140 aa).

The signal sequence occupies residues M1–A19. Positions K20–C140 constitute a C-type lysozyme domain. Disulfide bonds link C25–C140, C47–C131, C80–C96, and C92–C110. Ca(2+)-binding residues include K98, D101, D103, D106, and D107.

Lactose synthase (LS) is a heterodimer of a catalytic component, beta1,4-galactosyltransferase (beta4Gal-T1) and a regulatory component, alpha-lactalbumin (LA). In terms of tissue distribution, mammary gland specific. Secreted in milk.

It localises to the secreted. Its function is as follows. Regulatory subunit of lactose synthase, changes the substrate specificity of galactosyltransferase in the mammary gland making glucose a good acceptor substrate for this enzyme. This enables LS to synthesize lactose, the major carbohydrate component of milk. In other tissues, galactosyltransferase transfers galactose onto the N-acetylglucosamine of the oligosaccharide chains in glycoproteins. The polypeptide is Alpha-lactalbumin (LALBA) (Trichosurus vulpecula (Brush-tailed possum)).